Consider the following 124-residue polypeptide: Small ribosomal subunit protein uS12 (124 aa).

The residue at position 89 (Asp-89) is a 3-methylthioaspartic acid. At Lys-108 the chain carries N6-acetyllysine.

It belongs to the universal ribosomal protein uS12 family. Part of the 30S ribosomal subunit. Contacts proteins S8 and S17. May interact with IF1 in the 30S initiation complex.

In terms of biological role, with S4 and S5 plays an important role in translational accuracy. Functionally, interacts with and stabilizes bases of the 16S rRNA that are involved in tRNA selection in the A site and with the mRNA backbone. Located at the interface of the 30S and 50S subunits, it traverses the body of the 30S subunit contacting proteins on the other side and probably holding the rRNA structure together. The combined cluster of proteins S8, S12 and S17 appears to hold together the shoulder and platform of the 30S subunit. The sequence is that of Small ribosomal subunit protein uS12 from Escherichia coli O6:K15:H31 (strain 536 / UPEC).